The following is a 262-amino-acid chain: MAVGKNKRTSKGKKGGKKKVTDVFTKKEWYDLNAPKMFMVRKFGKTLVTKTIGKKLATDGLKGRIYEVNLADLNNDEDQAHKKIKLICDHIINRDCYTDFCGLSITRDKLCSLIRKGYTLIEGCTDVKTIDNYHLRMFCIAFTKKRPNQTKTTCYAQTSQIKKIRKKMVDIMHAEASKVLLKDLVKKIIPESIGKEVEKQCKKIFPLQNVLIRKVKILKRPKLDISKLMELHSDPKEDSGKNVKSLPESKEATNILTAELKH.

A compositionally biased stretch (basic and acidic residues) spans 234-251; sequence DPKEDSGKNVKSLPESKE. Residues 234–262 are disordered; the sequence is DPKEDSGKNVKSLPESKEATNILTAELKH.

The protein belongs to the eukaryotic ribosomal protein eS1 family. As to quaternary structure, component of the small ribosomal subunit. Mature ribosomes consist of a small (40S) and a large (60S) subunit. The 40S subunit contains about 33 different proteins and 1 molecule of RNA (18S). The 60S subunit contains about 49 different proteins and 3 molecules of RNA (25S, 5.8S and 5S).

The protein resides in the cytoplasm. The chain is Small ribosomal subunit protein eS1 from Plasmodium yoelii yoelii.